We begin with the raw amino-acid sequence, 188 residues long: Meiotically up-regulated gene 94 protein (188 aa).

It is found in the cytoplasm. It localises to the nucleus. In terms of biological role, has a role in meiosis. This chain is Meiotically up-regulated gene 94 protein (mug94), found in Schizosaccharomyces pombe (strain 972 / ATCC 24843) (Fission yeast).